Reading from the N-terminus, the 177-residue chain is Large ribosomal subunit protein uL6 (177 aa).

It belongs to the universal ribosomal protein uL6 family. Part of the 50S ribosomal subunit.

This protein binds to the 23S rRNA, and is important in its secondary structure. It is located near the subunit interface in the base of the L7/L12 stalk, and near the tRNA binding site of the peptidyltransferase center. The sequence is that of Large ribosomal subunit protein uL6 from Bordetella petrii (strain ATCC BAA-461 / DSM 12804 / CCUG 43448).